Consider the following 433-residue polypeptide: Probable beta-1,3-galactosyl-O-glycosyl-glycoprotein beta-1,6-N-acetylglucosaminyltransferase 7 (433 aa).

The Cytoplasmic segment spans residues 1–8 (MSQLRTTK). The chain crosses the membrane as a helical; Signal-anchor for type II membrane protein span at residues 9–25 (AGLVACGMICAFIFLYL). Topologically, residues 26–433 (RNPGPEEAEA…QSHFNSQPHH (408 aa)) are extracellular. Intrachain disulfides connect Cys-57–Cys-209, Cys-143–Cys-358, Cys-164–Cys-191, and Cys-367–Cys-398. Asn-112 carries an N-linked (GlcNAc...) asparagine glycan. The segment at 233 to 275 (NITPGVTPPANSKPKTGQGPPKPSPDENSYTAPNTIFKQSPPH) is disordered. Residues 258 to 275 (DENSYTAPNTIFKQSPPH) are compositionally biased toward polar residues. The tract at residues 413-433 (VPPEPHWQFPQQSHFNSQPHH) is disordered. Polar residues predominate over residues 421–433 (FPQQSHFNSQPHH).

Belongs to the glycosyltransferase 14 family.

Its subcellular location is the golgi apparatus membrane. It participates in protein modification; protein glycosylation. In terms of biological role, probable glycosyltransferase. This chain is Probable beta-1,3-galactosyl-O-glycosyl-glycoprotein beta-1,6-N-acetylglucosaminyltransferase 7, found in Mus musculus (Mouse).